Consider the following 146-residue polypeptide: Acidic phospholipase A2 2 (146 aa).

Residues 1 to 21 form the signal peptide; the sequence is MNPAHLLILAAVCVSSLGASS. The propeptide occupies 22–27; it reads NRPMPL. 7 disulfides stabilise this stretch: Cys38/Cys98, Cys53/Cys145, Cys55/Cys71, Cys70/Cys126, Cys77/Cys119, Cys87/Cys112, and Cys105/Cys117. Ca(2+)-binding residues include Tyr54, Gly56, and Gly58. Residue His74 is part of the active site. Asp75 provides a ligand contact to Ca(2+). The active site involves Asp120.

It belongs to the phospholipase A2 family. Group I subfamily. D49 sub-subfamily. The cofactor is Ca(2+). As to expression, expressed by the venom gland.

It localises to the secreted. It catalyses the reaction a 1,2-diacyl-sn-glycero-3-phosphocholine + H2O = a 1-acyl-sn-glycero-3-phosphocholine + a fatty acid + H(+). Its function is as follows. PLA2 catalyzes the calcium-dependent hydrolysis of the 2-acyl groups in 3-sn-phosphoglycerides. This Naja kaouthia (Monocled cobra) protein is Acidic phospholipase A2 2.